A 1053-amino-acid polypeptide reads, in one-letter code: Carbamoyl phosphate synthase large chain (1053 aa).

The interval 1-397 (MPKRTDIKKV…SFMKAKRSID (397 aa)) is carboxyphosphate synthetic domain. Residues Arg127, Arg167, Gly173, Gly174, Glu206, Val208, Glu213, Gly239, Ile240, His241, Gln282, and Glu294 each coordinate ATP. The ATP-grasp 1 domain occupies 131–323 (RDLMNEIGEP…IARVAAKIAI (193 aa)). The Mg(2+) site is built by Gln282, Glu294, and Asn296. Residues Gln282, Glu294, and Asn296 each contribute to the Mn(2+) site. The segment at 398-530 (TDVRTHTSPS…YSTREGTSEI (133 aa)) is oligomerization domain. Residues 531-919 (VRDKKQKILI…YKACISADNE (389 aa)) are carbamoyl phosphate synthetic domain. Residues 661–852 (SVLLTTLQIP…IAKIAAKVMI (192 aa)) form the ATP-grasp 2 domain. ATP-binding residues include Arg697, Ser736, Leu738, Glu743, Gly768, Ile769, His770, Ser771, Gln811, and Glu823. Mg(2+) is bound by residues Gln811, Glu823, and Asn825. Gln811, Glu823, and Asn825 together coordinate Mn(2+). One can recognise an MGS-like domain in the interval 918-1053 (NELPLKGNVF…TLEPLSHYLR (136 aa)). The segment at 920–1053 (LPLKGNVFVS…TLEPLSHYLR (134 aa)) is allosteric domain.

It belongs to the CarB family. In terms of assembly, composed of two chains; the small (or glutamine) chain promotes the hydrolysis of glutamine to ammonia, which is used by the large (or ammonia) chain to synthesize carbamoyl phosphate. Tetramer of heterodimers (alpha,beta)4. Mg(2+) serves as cofactor. The cofactor is Mn(2+).

It carries out the reaction hydrogencarbonate + L-glutamine + 2 ATP + H2O = carbamoyl phosphate + L-glutamate + 2 ADP + phosphate + 2 H(+). It catalyses the reaction hydrogencarbonate + NH4(+) + 2 ATP = carbamoyl phosphate + 2 ADP + phosphate + 2 H(+). It participates in amino-acid biosynthesis; L-arginine biosynthesis; carbamoyl phosphate from bicarbonate: step 1/1. Its pathway is pyrimidine metabolism; UMP biosynthesis via de novo pathway; (S)-dihydroorotate from bicarbonate: step 1/3. Large subunit of the glutamine-dependent carbamoyl phosphate synthetase (CPSase). CPSase catalyzes the formation of carbamoyl phosphate from the ammonia moiety of glutamine, carbonate, and phosphate donated by ATP, constituting the first step of 2 biosynthetic pathways, one leading to arginine and/or urea and the other to pyrimidine nucleotides. The large subunit (synthetase) binds the substrates ammonia (free or transferred from glutamine from the small subunit), hydrogencarbonate and ATP and carries out an ATP-coupled ligase reaction, activating hydrogencarbonate by forming carboxy phosphate which reacts with ammonia to form carbamoyl phosphate. The chain is Carbamoyl phosphate synthase large chain from Methanoregula boonei (strain DSM 21154 / JCM 14090 / 6A8).